The sequence spans 275 residues: MKLKGEVALVTGGGAGLGRAIVDRYVAEGARVAVLDKSAAGLEEIRKRHGDAVVGIEGDVRSLDSHREAVARCVETFGKLDCLIGNAGVWDYQTQLADIPDNGISEAFDEMFAIIVKGYILAAKAALPALYKSKGSAIFTVSNAGFYPGGGGVLYTAGKHAVIGLVKQLAHEWGPRIRVNGIAPGGILGSDIRGLKTLGLQDQTIATMPLADMLGPVLPTGRVATAEEYAGAYVFFATRADTVPLTGSVLNIDGGMGVRGLFEASLGAQLDKHFA.

Tyr-155 (proton acceptor) is an active-site residue.

It belongs to the short-chain dehydrogenases/reductases (SDR) family.

The catalysed reaction is (1R,2R)-3-chlorocyclohexa-3,5-diene-1,2-diol + NAD(+) = 3-chlorocatechol + NADH + H(+). Its pathway is aromatic compound metabolism. In terms of biological role, can transform various dihydrodiols of chlorobenzenes and chlorotoluenes into the respective catechols. The chain is Chlorobenzene dihydrodiol dehydrogenase from Cupriavidus sp. (strain PS12).